The chain runs to 284 residues: uncharacterized protein (284 aa).

Residues 1–23 (MKRGCAIAVMICGLITSVSAASA) form the signal peptide.

It belongs to the surface antigen msp4 family.

This is an uncharacterized protein from Brucella abortus (strain 2308).